The chain runs to 230 residues: Uracil-DNA glycosylase (230 aa).

Catalysis depends on Asp-70, which acts as the Proton acceptor.

Belongs to the uracil-DNA glycosylase (UDG) superfamily. UNG family.

The protein resides in the cytoplasm. The enzyme catalyses Hydrolyzes single-stranded DNA or mismatched double-stranded DNA and polynucleotides, releasing free uracil.. Functionally, excises uracil residues from the DNA which can arise as a result of misincorporation of dUMP residues by DNA polymerase or due to deamination of cytosine. The sequence is that of Uracil-DNA glycosylase from Pseudomonas fluorescens (strain ATCC BAA-477 / NRRL B-23932 / Pf-5).